The following is a 257-amino-acid chain: GTP cyclohydrolase FolE2 (257 aa).

This sequence belongs to the GTP cyclohydrolase IV family.

It carries out the reaction GTP + H2O = 7,8-dihydroneopterin 3'-triphosphate + formate + H(+). Its pathway is cofactor biosynthesis; 7,8-dihydroneopterin triphosphate biosynthesis; 7,8-dihydroneopterin triphosphate from GTP: step 1/1. Converts GTP to 7,8-dihydroneopterin triphosphate. The protein is GTP cyclohydrolase FolE2 of Dictyoglomus thermophilum (strain ATCC 35947 / DSM 3960 / H-6-12).